We begin with the raw amino-acid sequence, 256 residues long: Type III pantothenate kinase (256 aa).

An ATP-binding site is contributed by 6–13; it reads DAGNSRIK. Residues Y90 and 97–100 contribute to the substrate site; that span reads GSDR. The active-site Proton acceptor is D99. T123 contributes to the ATP binding site. T187 is a binding site for substrate.

This sequence belongs to the type III pantothenate kinase family. As to quaternary structure, homodimer. The cofactor is NH4(+). K(+) serves as cofactor.

It is found in the cytoplasm. It carries out the reaction (R)-pantothenate + ATP = (R)-4'-phosphopantothenate + ADP + H(+). It functions in the pathway cofactor biosynthesis; coenzyme A biosynthesis; CoA from (R)-pantothenate: step 1/5. Its function is as follows. Catalyzes the phosphorylation of pantothenate (Pan), the first step in CoA biosynthesis. The chain is Type III pantothenate kinase from Burkholderia mallei (strain ATCC 23344).